Here is a 165-residue protein sequence, read N- to C-terminus: Zinc finger C2H2 protein ECU11_0990 (165 aa).

Basic and acidic residues-rich tracts occupy residues 1–10 and 19–32; these read MEAESPKERV and DPER…DTSS. The interval 1–38 is disordered; the sequence is MEAESPKERVQGVSGESWDPERGVKEREDTSSKKGKGV. C2H2-type zinc fingers lie at residues 103–125 and 136–158; these read FGCE…KAQH and LFCP…SRYH.

This Encephalitozoon cuniculi (strain GB-M1) (Microsporidian parasite) protein is Zinc finger C2H2 protein ECU11_0990.